The primary structure comprises 398 residues: Acetate kinase (398 aa).

N7 contacts Mg(2+). Position 14 (K14) interacts with ATP. R85 serves as a coordination point for substrate. The Proton donor/acceptor role is filled by D142. Residues 202–206 (HLGNG), 277–279 (DMR), and 325–329 (GIGEN) contribute to the ATP site. A Mg(2+)-binding site is contributed by E379.

It belongs to the acetokinase family. Homodimer. The cofactor is Mg(2+). It depends on Mn(2+) as a cofactor.

The protein localises to the cytoplasm. The enzyme catalyses acetate + ATP = acetyl phosphate + ADP. It functions in the pathway metabolic intermediate biosynthesis; acetyl-CoA biosynthesis; acetyl-CoA from acetate: step 1/2. Catalyzes the formation of acetyl phosphate from acetate and ATP. Can also catalyze the reverse reaction. This chain is Acetate kinase, found in Deinococcus radiodurans (strain ATCC 13939 / DSM 20539 / JCM 16871 / CCUG 27074 / LMG 4051 / NBRC 15346 / NCIMB 9279 / VKM B-1422 / R1).